A 266-amino-acid chain; its full sequence is PTS system mannose-specific EIIC component (266 aa).

Methionine 1 carries the post-translational modification N-formylmethionine. The Periplasmic segment spans residues 1-4 (MEIT). The PTS EIIC type-4 domain maps to 1 to 237 (MEITTLQIVL…GVIGTVMAVL (237 aa)). Residues 5 to 43 (TLQIVLVFIVACIAGMGSILDEFQFHRPLIACTLVGIVL) lie within the membrane without spanning it. The Periplasmic segment spans residues 44-46 (GDM). Residues 47-86 (KTGIIIGGTLEMIALGWMNIGAAVAPDAALASIISTILVI) lie within the membrane without spanning it. Topologically, residues 87-90 (AGHQ) are periplasmic. At 91–124 (SIGAGIALAIPLAAAGQVLTIIVRTITVAFQHAA) the chain is embedded in the membrane. Residues 125–132 (DKAADNGN) are Cytoplasmic-facing. A transmembrane helix spans residues 133–160 (LTAISWIHVSSLFLQAMRVAIPAVIVAL). Residues 161–176 (SVGTSEVQNMLNAIPE) are Periplasmic-facing. The chain crosses the lipid bilayer at residues 177–200 (VVTNGLNIAGGMIVVVGYAMVINM). At 201–207 (MRAGYLM) the chain is on the cytoplasmic side. At 208–218 (PFFYLGFVTAA) the chain is embedded in the membrane. The Periplasmic segment spans residues 219 to 224 (FTNFNL). The hydrophobic stretch at 225-242 (VALGVIGTVMAVLYIQLS) threads the membrane. The Cytoplasmic segment spans residues 243-266 (PKYNRVAGAPAQAAGNNDLDNELD).

As to quaternary structure, homotrimer of protomers that are composed of two subunits, IIC and IID.

Its subcellular location is the cell inner membrane. In terms of biological role, the phosphoenolpyruvate-dependent sugar phosphotransferase system (sugar PTS), a major carbohydrate active transport system, catalyzes the phosphorylation of incoming sugar substrates concomitantly with their translocation across the cell membrane. The enzyme II ManXYZ PTS system is involved in mannose transport. The polypeptide is PTS system mannose-specific EIIC component (manY) (Escherichia coli O157:H7).